Reading from the N-terminus, the 274-residue chain is Thiamine kinase (274 aa).

This sequence belongs to the thiamine kinase family.

It catalyses the reaction thiamine + ATP = thiamine phosphate + ADP + H(+). It functions in the pathway cofactor biosynthesis; thiamine diphosphate biosynthesis; thiamine phosphate from thiamine: step 1/1. Functionally, catalyzes the ATP-dependent phosphorylation of thiamine to thiamine phosphate. Is involved in thiamine salvage. The sequence is that of Thiamine kinase from Escherichia coli O45:K1 (strain S88 / ExPEC).